A 413-amino-acid polypeptide reads, in one-letter code: Clusterin-associated protein 1 (413 aa).

A coiled-coil region spans residues 198–291 (KTKDLLNNVA…ERFEEAKNTL (94 aa)). Positions 305–413 (LLKSGSNDDS…EPLDESDNDF (109 aa)) are disordered. Composition is skewed to acidic residues over residues 312–328 (DDSDIDIQEDDESDSEL) and 360–388 (DSDDNEDSEESEIDMEDDDDEDDDLEDES). Ser314, Ser324, and Ser326 each carry phosphoserine. Ser409 carries the phosphoserine modification.

This sequence belongs to the CLUAP1 family. Interacts with CLU/clusterin. Interacts with UBXN10; the interaction is direct. As to expression, expressed in testis, thyroid and trachea and to a lower extent in spinal cord and adrenal gland. Highly expressed in colon cancer and osteosarcoma cell lines.

The protein localises to the cell projection. Its subcellular location is the cilium. The protein resides in the nucleus. Its function is as follows. Required for cilia biogenesis. Appears to function within the multiple intraflagellar transport complex B (IFT-B). Key regulator of hedgehog signaling. The sequence is that of Clusterin-associated protein 1 (CLUAP1) from Homo sapiens (Human).